A 163-amino-acid chain; its full sequence is MSDIILKGKVHKYGSNVNTDEIIPARYLNTTDPTILSKYCMEDIDKNFVKNVKAGDIIVAENNFGCGSSREHAPIAIKASGISAVIANSFARIFFRNSINIGLPILESQKAVKAIENGDAVEINLTKGIIKNITKNESYQSQPFPEFMQKVIKSGGLLGYIKS.

It belongs to the LeuD family. LeuD type 2 subfamily. As to quaternary structure, heterodimer of LeuC and LeuD.

It carries out the reaction (2R,3S)-3-isopropylmalate = (2S)-2-isopropylmalate. It participates in amino-acid biosynthesis; L-leucine biosynthesis; L-leucine from 3-methyl-2-oxobutanoate: step 2/4. Functionally, catalyzes the isomerization between 2-isopropylmalate and 3-isopropylmalate, via the formation of 2-isopropylmaleate. The sequence is that of 3-isopropylmalate dehydratase small subunit from Endomicrobium trichonymphae.